The sequence spans 150 residues: Protein NrdI (150 aa).

The protein belongs to the NrdI family.

Its function is as follows. Probably involved in ribonucleotide reductase function. This chain is Protein NrdI, found in Mycobacterium avium (strain 104).